The chain runs to 146 residues: UPF0735 ACT domain-containing protein Cbei_1295 (146 aa).

The region spanning threonine 70–methionine 145 is the ACT domain.

This sequence belongs to the UPF0735 family.

The protein is UPF0735 ACT domain-containing protein Cbei_1295 of Clostridium beijerinckii (strain ATCC 51743 / NCIMB 8052) (Clostridium acetobutylicum).